A 101-amino-acid chain; its full sequence is Phosphoribosyl-AMP cyclohydrolase (101 aa).

Asp71 serves as a coordination point for Mg(2+). A Zn(2+)-binding site is contributed by Cys72. Residues Asp73 and Asp75 each contribute to the Mg(2+) site. Residues Cys88 and Cys95 each coordinate Zn(2+).

It belongs to the PRA-CH family. Homodimer. Mg(2+) serves as cofactor. Requires Zn(2+) as cofactor.

It is found in the cytoplasm. It carries out the reaction 1-(5-phospho-beta-D-ribosyl)-5'-AMP + H2O = 1-(5-phospho-beta-D-ribosyl)-5-[(5-phospho-beta-D-ribosylamino)methylideneamino]imidazole-4-carboxamide. It participates in amino-acid biosynthesis; L-histidine biosynthesis; L-histidine from 5-phospho-alpha-D-ribose 1-diphosphate: step 3/9. In terms of biological role, catalyzes the hydrolysis of the adenine ring of phosphoribosyl-AMP. This is Phosphoribosyl-AMP cyclohydrolase from Bacillus cereus (strain Q1).